Consider the following 83-residue polypeptide: uncharacterized protein (83 aa).

This is an uncharacterized protein from Acidianus bottle-shaped virus (isolate Italy/Pozzuoli) (ABV).